Reading from the N-terminus, the 208-residue chain is ATP-dependent Clp protease proteolytic subunit 1 (208 aa).

Residue S108 is the Nucleophile of the active site. H133 is a catalytic residue.

The protein belongs to the peptidase S14 family. As to quaternary structure, fourteen ClpP subunits assemble into 2 heptameric rings which stack back to back to give a disk-like structure with a central cavity, resembling the structure of eukaryotic proteasomes.

It localises to the cytoplasm. The enzyme catalyses Hydrolysis of proteins to small peptides in the presence of ATP and magnesium. alpha-casein is the usual test substrate. In the absence of ATP, only oligopeptides shorter than five residues are hydrolyzed (such as succinyl-Leu-Tyr-|-NHMec, and Leu-Tyr-Leu-|-Tyr-Trp, in which cleavage of the -Tyr-|-Leu- and -Tyr-|-Trp bonds also occurs).. Cleaves peptides in various proteins in a process that requires ATP hydrolysis. Has a chymotrypsin-like activity. Plays a major role in the degradation of misfolded proteins. This is ATP-dependent Clp protease proteolytic subunit 1 from Corynebacterium glutamicum (strain ATCC 13032 / DSM 20300 / JCM 1318 / BCRC 11384 / CCUG 27702 / LMG 3730 / NBRC 12168 / NCIMB 10025 / NRRL B-2784 / 534).